Reading from the N-terminus, the 1462-residue chain is Gag-Pro-Pol polyprotein (1462 aa).

Residue G2 is the site of N-myristoyl glycine; by host attachment. The disordered stretch occupies residues 93–143 (QIPSHPAPPPPSSPTHDPPDSDPQIPPPYVEPTAPQVLPVMHPHGVPPTHR). S105 is modified (phosphoserine; by host MAPK1). The PPXY motif motif lies at 118–121 (PPPY). Positions 124–127 (PTAP) match the PTAP/PSAP motif motif. CCHC-type zinc fingers lie at residues 355–372 (QPCF…DCAQ) and 378–395 (GPCP…DCPR). The 79-residue stretch at 476 to 554 (IEALLDTGAD…NNWAIIGRDA (79 aa)) folds into the Peptidase A2 domain. The active-site For protease activity; shared with dimeric partner is the D481. The 191-residue stretch at 614-804 (LEAGHIEPYT…GTIKFLGQII (191 aa)) folds into the Reverse transcriptase domain. Mg(2+) contacts are provided by D680, D755, D756, D1040, E1074, D1096, D1157, D1230, and D1287. One can recognise an RNase H type-1 domain in the interval 1031–1165 (INTAPCLFSD…TDALLITPIL (135 aa)). Residues 1219–1388 (RGLLPNHIWQ…QPIPETHSLI (170 aa)) form the Integrase catalytic domain. A DNA-binding region (integrase-type) is located at residues 1393-1443 (HWYYFKLPGLNSRQWKGPQEALQEAAGAALIPVSANSAQWIPWRLLKQAAC).

As to quaternary structure, homodimer; the homodimers are part of the immature particles. Interacts with human TSG101 and NEDD4; these interactions are essential for budding and release of viral particles. Homodimer; further assembles as homohexamers. Mg(2+) serves as cofactor. Phosphorylation of the matrix protein p19 by MAPK1 seems to play a role in budding. In terms of processing, myristoylated. Myristoylation of the matrix (MA) domain mediates the transport and binding of Gag polyproteins to the host plasma membrane and is required for the assembly of viral particles. Post-translationally, specific enzymatic cleavages by the viral protease yield mature proteins. The polyprotein is cleaved during and after budding, this process is termed maturation. The protease is autoproteolytically processed at its N- and C-termini.

The protein resides in the virion. It carries out the reaction Endonucleolytic cleavage to 5'-phosphomonoester.. It catalyses the reaction DNA(n) + a 2'-deoxyribonucleoside 5'-triphosphate = DNA(n+1) + diphosphate. The matrix domain targets Gag, Gag-Pro and Gag-Pro-Pol polyproteins to the plasma membrane via a multipartite membrane binding signal, that includes its myristoylated N-terminus. Functionally, matrix protein. In terms of biological role, forms the spherical core of the virus that encapsulates the genomic RNA-nucleocapsid complex. Its function is as follows. Binds strongly to viral nucleic acids and promote their aggregation. Also destabilizes the nucleic acids duplexes via highly structured zinc-binding motifs. The aspartyl protease mediates proteolytic cleavages of Gag and Gag-Pol polyproteins during or shortly after the release of the virion from the plasma membrane. Cleavages take place as an ordered, step-wise cascade to yield mature proteins. This process is called maturation. Displays maximal activity during the budding process just prior to particle release from the cell (Potential). Cleaves the translation initiation factor eIF4G leading to the inhibition of host cap-dependent translation. Functionally, RT is a multifunctional enzyme that converts the viral RNA genome into dsDNA in the cytoplasm, shortly after virus entry into the cell. This enzyme displays a DNA polymerase activity that can copy either DNA or RNA templates, and a ribonuclease H (RNase H) activity that cleaves the RNA strand of RNA-DNA heteroduplexes in a partially processive 3' to 5'-endonucleasic mode. Conversion of viral genomic RNA into dsDNA requires many steps. A tRNA-Pro binds to the primer-binding site (PBS) situated at the 5'-end of the viral RNA. RT uses the 3' end of the tRNA primer to perform a short round of RNA-dependent minus-strand DNA synthesis. The reading proceeds through the U5 region and ends after the repeated (R) region which is present at both ends of viral RNA. The portion of the RNA-DNA heteroduplex is digested by the RNase H, resulting in a ssDNA product attached to the tRNA primer. This ssDNA/tRNA hybridizes with the identical R region situated at the 3' end of viral RNA. This template exchange, known as minus-strand DNA strong stop transfer, can be either intra- or intermolecular. RT uses the 3' end of this newly synthesized short ssDNA to perform the RNA-dependent minus-strand DNA synthesis of the whole template. RNase H digests the RNA template except for a polypurine tract (PPT) situated at the 5' end of the genome. It is not clear if both polymerase and RNase H activities are simultaneous. RNase H probably can proceed both in a polymerase-dependent (RNA cut into small fragments by the same RT performing DNA synthesis) and a polymerase-independent mode (cleavage of remaining RNA fragments by free RTs). Secondly, RT performs DNA-directed plus-strand DNA synthesis using the PPT that has not been removed by RNase H as primer. PPT and tRNA primers are then removed by RNase H. The 3' and 5' ssDNA PBS regions hybridize to form a circular dsDNA intermediate. Strand displacement synthesis by RT to the PBS and PPT ends produces a blunt ended, linear dsDNA copy of the viral genome that includes long terminal repeats (LTRs) at both ends. In terms of biological role, catalyzes viral DNA integration into the host chromosome, by performing a series of DNA cutting and joining reactions. The chain is Gag-Pro-Pol polyprotein (gag-pro-pol) from Homo sapiens (Human).